The sequence spans 376 residues: Carbohydrate sulfotransferase 14 (376 aa).

Residues 1–39 are Cytoplasmic-facing; the sequence is MFPRPLTPLAAPNGAEPLGRALRRAPLGRARAGLGGPPL. A helical; Signal-anchor for type II membrane protein transmembrane segment spans residues 40–60; that stretch reads LLPSMLMFAVIVASSGLLLMI. Over 61–376 the chain is Lumenal; the sequence is ERGILAEMKP…PNVTKEACQQ (316 aa). N110 carries an N-linked (GlcNAc...) asparagine glycan. Residues 155–161 and 213–221 contribute to the 3'-phosphoadenylyl sulfate site; these read PKVACSN and REPLERLLS. The N-linked (GlcNAc...) asparagine glycan is linked to N368.

Belongs to the sulfotransferase 2 family. As to expression, widely expressed. Expressed at high level in pituitary gland, placenta, uterus and thyroid.

It localises to the golgi apparatus membrane. The enzyme catalyses dermatan + n 3'-phosphoadenylyl sulfate = dermatan 4'-sulfate + n adenosine 3',5'-bisphosphate + n H(+). Its function is as follows. Catalyzes the transfer of sulfate to position 4 of the N-acetylgalactosamine (GalNAc) residue of dermatan sulfate. Plays a pivotal role in the formation of 4-0-sulfated IdoA blocks in dermatan sulfate. Transfers sulfate to the C-4 hydroxyl of beta1,4-linked GalNAc that is substituted with an alpha-linked iduronic acid (IdoUA) at the C-3 hydroxyl. Transfers sulfate more efficiently to GalNAc residues in -IdoUA-GalNAc-IdoUA- than in -GlcUA-GalNAc-GlcUA-sequences. Has preference for partially desulfated dermatan sulfate. Addition of sulfate to GalNAc may occur immediately after epimerization of GlcUA to IdoUA. Appears to have an important role in the formation of the cerebellar neural network during postnatal brain development. This chain is Carbohydrate sulfotransferase 14 (CHST14), found in Homo sapiens (Human).